The chain runs to 160 residues: Cytochrome c-type biogenesis protein CcmE (160 aa).

Over 1-8 the chain is Cytoplasmic; the sequence is MNPRRKQR. A helical; Signal-anchor for type II membrane protein membrane pass occupies residues 9–29; that stretch reads LTWVAILVIGVSVATGLMLYA. The Periplasmic portion of the chain corresponds to 30-160; that stretch reads LSQSIDLFYT…PNTVEKGEGQ (131 aa). 2 residues coordinate heme: histidine 130 and tyrosine 134.

Belongs to the CcmE/CycJ family.

Its subcellular location is the cell inner membrane. Functionally, heme chaperone required for the biogenesis of c-type cytochromes. Transiently binds heme delivered by CcmC and transfers the heme to apo-cytochromes in a process facilitated by CcmF and CcmH. The sequence is that of Cytochrome c-type biogenesis protein CcmE from Idiomarina loihiensis (strain ATCC BAA-735 / DSM 15497 / L2-TR).